A 188-amino-acid polypeptide reads, in one-letter code: Elongation factor P (188 aa).

Belongs to the elongation factor P family.

Its subcellular location is the cytoplasm. It functions in the pathway protein biosynthesis; polypeptide chain elongation. Its function is as follows. Involved in peptide bond synthesis. Stimulates efficient translation and peptide-bond synthesis on native or reconstituted 70S ribosomes in vitro. Probably functions indirectly by altering the affinity of the ribosome for aminoacyl-tRNA, thus increasing their reactivity as acceptors for peptidyl transferase. This Wolbachia pipientis subsp. Culex pipiens (strain wPip) protein is Elongation factor P.